We begin with the raw amino-acid sequence, 517 residues long: Alpha-amylase (517 aa).

Residues 1–21 form the signal peptide; that stretch reads MAHLLLAVVAITLALSQSVFG. A disulfide bridge links Cys-52 with Cys-108. Residues Asn-122, Arg-178, and Asp-187 each coordinate Ca(2+). Chloride is bound at residue Arg-215. Catalysis depends on Asp-217, which acts as the Nucleophile. His-221 provides a ligand contact to Ca(2+). Catalysis depends on Glu-253, which acts as the Proton donor. Arg-355 is a chloride binding site. Disulfide bonds link Cys-397-Cys-403 and Cys-470-Cys-482.

It belongs to the glycosyl hydrolase 13 family. As to quaternary structure, monomer. Ca(2+) is required as a cofactor. The cofactor is chloride.

The protein localises to the secreted. It carries out the reaction Endohydrolysis of (1-&gt;4)-alpha-D-glucosidic linkages in polysaccharides containing three or more (1-&gt;4)-alpha-linked D-glucose units.. Its activity is regulated as follows. Activated by chloride ions. Inhibited by acarbose. Not inhibited by wheat alpha-amylase inhibitors 1 (WI-1, the tetrameric form) or 3 (WI-3, the monomeric form) and bean alpha-amylase inhibitor 1 (alphaAI-1). The protein is Alpha-amylase of Acarus siro (Flour mite).